Consider the following 127-residue polypeptide: Large ribosomal subunit protein bL17 (127 aa).

The protein belongs to the bacterial ribosomal protein bL17 family. Part of the 50S ribosomal subunit. Contacts protein L32.

In Lactobacillus gasseri (strain ATCC 33323 / DSM 20243 / BCRC 14619 / CIP 102991 / JCM 1131 / KCTC 3163 / NCIMB 11718 / NCTC 13722 / AM63), this protein is Large ribosomal subunit protein bL17.